Here is a 258-residue protein sequence, read N- to C-terminus: Triosephosphate isomerase (258 aa).

A substrate-binding site is contributed by 9 to 11; that stretch reads NWK. Residue H105 is the Electrophile of the active site. E176 functions as the Proton acceptor in the catalytic mechanism. Positions 182 and 214 each coordinate substrate.

This sequence belongs to the triosephosphate isomerase family. Homodimer.

It is found in the cytoplasm. The catalysed reaction is D-glyceraldehyde 3-phosphate = dihydroxyacetone phosphate. Its pathway is carbohydrate biosynthesis; gluconeogenesis. The protein operates within carbohydrate degradation; glycolysis; D-glyceraldehyde 3-phosphate from glycerone phosphate: step 1/1. Functionally, involved in the gluconeogenesis. Catalyzes stereospecifically the conversion of dihydroxyacetone phosphate (DHAP) to D-glyceraldehyde-3-phosphate (G3P). The protein is Triosephosphate isomerase of Mycoplasmopsis agalactiae (strain NCTC 10123 / CIP 59.7 / PG2) (Mycoplasma agalactiae).